A 289-amino-acid chain; its full sequence is Undecaprenyl-diphosphatase (289 aa).

A run of 8 helical transmembrane segments spans residues 23–43, 56–76, 104–124, 135–155, 165–185, 210–230, 235–255, and 269–289; these read LFLG…TAHL, GVAV…AYFW, SAIV…KLFW, IPAI…AENV, LSFW…IPGV, FLLG…QAFG, VDVF…WIAI, and IFIT…YLAF.

It belongs to the UppP family.

The protein localises to the cell inner membrane. It catalyses the reaction di-trans,octa-cis-undecaprenyl diphosphate + H2O = di-trans,octa-cis-undecaprenyl phosphate + phosphate + H(+). Catalyzes the dephosphorylation of undecaprenyl diphosphate (UPP). Confers resistance to bacitracin. The chain is Undecaprenyl-diphosphatase from Prochlorococcus marinus (strain SARG / CCMP1375 / SS120).